We begin with the raw amino-acid sequence, 1372 residues long: DNA-directed RNA polymerase subunit beta' (1372 aa).

Positions 69, 71, 84, and 87 each coordinate Zn(2+). 3 residues coordinate Mg(2+): Asp460, Asp462, and Asp464. Cys808, Cys882, Cys889, and Cys892 together coordinate Zn(2+).

This sequence belongs to the RNA polymerase beta' chain family. In terms of assembly, the RNAP catalytic core consists of 2 alpha, 1 beta, 1 beta' and 1 omega subunit. When a sigma factor is associated with the core the holoenzyme is formed, which can initiate transcription. Mg(2+) is required as a cofactor. Zn(2+) serves as cofactor.

The catalysed reaction is RNA(n) + a ribonucleoside 5'-triphosphate = RNA(n+1) + diphosphate. Its function is as follows. DNA-dependent RNA polymerase catalyzes the transcription of DNA into RNA using the four ribonucleoside triphosphates as substrates. This chain is DNA-directed RNA polymerase subunit beta', found in Rickettsia rickettsii (strain Iowa).